Reading from the N-terminus, the 560-residue chain is Arginine--tRNA ligase (560 aa).

The short motif at 135–145 is the 'HIGH' region element; the sequence is ANPTGLLHMGN.

Belongs to the class-I aminoacyl-tRNA synthetase family. In terms of assembly, monomer.

The protein localises to the cytoplasm. It carries out the reaction tRNA(Arg) + L-arginine + ATP = L-arginyl-tRNA(Arg) + AMP + diphosphate. In Moorella thermoacetica (strain ATCC 39073 / JCM 9320), this protein is Arginine--tRNA ligase.